We begin with the raw amino-acid sequence, 534 residues long: MIWGVLMMGILLPQCSAHPGFFTSIGQMTDLIHNEKDLVTSLKDYIKAEEDKLEQIKKWAEKLDRLTSTATKDPEGFVGHPVNAFKLMKRLNTEWSELENLILKDMSDGFISNLTIQRQYFPNDEDQVGAAKALFRLQDTYNLDTNTISKGNLPGVKHKSFLTAEDCFELGKVAYTEADYYHTELWMEQALMQLEEGEMSTVDKVSVLDYLSYAVYQQGDLDKALLLTKKLLELDPEHQRANGNLVYFEYIMSKEKDANKSASGDQSDQKTTPKKKGIAVDYLPERQKYEMLCRGEGIKMTPRRQKRLFCRYHDGNRNPKFILAPAKQEDEWDKPRIIRFHDIISDAEIEIVKDLAKPRLSRATVHDPETGKLTTAQYRVSKSAWLSGYEDPVVSRINMRIQDLTGLDVSTAEELQVANYGVGGQYEPHFDFARKDEPDAFRELGTGNRIATWLFYMSDVSAGGATVFPEVGASVWPKKGTAVFWYNLFASGEGDYSTRHAACPVLVGNKWVSNKWLHERGQEFRRPCTLSELE.

Residues 1–17 (MIWGVLMMGILLPQCSA) form the signal peptide. N113 is a glycosylation site (N-linked (GlcNAc...) asparagine). The TPR repeat unit spans residues 205–238 (VSVLDYLSYAVYQQGDLDKALLLTKKLLELDPEH). The N-linked (GlcNAc...) asparagine glycan is linked to N259. One can recognise a Fe2OG dioxygenase domain in the interval 411-519 (TAEELQVANY…KWVSNKWLHE (109 aa)). Residues H429, D431, and H500 each coordinate Fe cation. Residue K510 coordinates 2-oxoglutarate.

It belongs to the P4HA family. In terms of assembly, heterotetramer of two alpha-1 chains and two beta chains (P4HB)(the beta chain is the multi-functional PDI), where P4HB plays the role of a structural subunit; this tetramer catalyzes the formation of 4-hydroxyproline in collagen. It depends on Fe(2+) as a cofactor. L-ascorbate serves as cofactor.

Its subcellular location is the endoplasmic reticulum lumen. It catalyses the reaction L-prolyl-[collagen] + 2-oxoglutarate + O2 = trans-4-hydroxy-L-prolyl-[collagen] + succinate + CO2. In terms of biological role, catalyzes the post-translational formation of 4-hydroxyproline in -Xaa-Pro-Gly- sequences in collagens and other proteins. The sequence is that of Prolyl 4-hydroxylase subunit alpha-1 (P4ha1) from Rattus norvegicus (Rat).